A 160-amino-acid chain; its full sequence is Photosystem II extrinsic protein V (160 aa).

A signal peptide spans 1–25; sequence MKRFFLVAIASVLFFFNTMVGSANA. Heme c contacts are provided by Cys-62, Cys-65, His-66, and His-117.

It belongs to the cytochrome c family. PsbV subfamily. As to quaternary structure, PSII is composed of 1 copy each of membrane proteins PsbA, PsbB, PsbC, PsbD, PsbE, PsbF, PsbH, PsbI, PsbJ, PsbK, PsbL, PsbM, PsbT, PsbX, PsbY, PsbZ, Psb30/Ycf12, peripheral proteins PsbO, CyanoQ (PsbQ), PsbU, PsbV and a large number of cofactors. It forms dimeric complexes. The cyanobacterial oxygen-evolving complex is composed of PsbO, CyanoQ (PsbQ), PsbV and PsbU. Requires heme c as cofactor.

It is found in the cellular thylakoid membrane. Its function is as follows. One of the extrinsic, lumenal subunits of photosystem II (PSII). PSII is a light-driven water plastoquinone oxidoreductase, using light energy to abstract electrons from H(2)O, generating a proton gradient subsequently used for ATP formation. The extrinsic proteins stabilize the structure of photosystem II oxygen-evolving complex (OEC), the ion environment of oxygen evolution and protect the OEC against heat-induced inactivation. Low-potential cytochrome c that plays a role in the OEC of PSII, required for normal function or stabilization of PSII. This is Photosystem II extrinsic protein V from Synechocystis sp. (strain ATCC 27184 / PCC 6803 / Kazusa).